The following is a 329-amino-acid chain: MTQLFYDTDADLSLLKNKTIAIIGYGSQGHAHALNLKDSGMDVIVGLYKGSNSESKAINDGLKVFTVSEACEKADWIMILLPDEFQKDVYIKEIEPNLKEGKILSFAHGFNIRFELIKPPNFVDVVMIAPKGPGHTVRWEYQNGQGVPALFAVEQDYSGNARSLAMSYAKGIGGTRAGILETNFKEETETDLFGEQAVLCGGLSELVKSGFETLVEAGYQPELAYFECLHEVKLIVDLMVKGGLSQMRDSISNTAEYGDYVSGKRLINNETKKEMQKILKDIQDGTFAKNFVDECDNNKPLMTKLREENSKHEIEKVGKGLRAMFSWLK.

One can recognise a KARI N-terminal Rossmann domain in the interval 2-182; sequence TQLFYDTDAD…GGTRAGILET (181 aa). Residues 25-28, Ser51, Ser53, and 83-86 contribute to the NADP(+) site; these read YGSQ and DEFQ. His108 is an active-site residue. Position 134 (Gly134) interacts with NADP(+). The 146-residue stretch at 183–328 folds into the KARI C-terminal knotted domain; it reads NFKEETETDL…KGLRAMFSWL (146 aa). Mg(2+) contacts are provided by Asp191, Glu195, Glu227, and Glu231. Ser252 provides a ligand contact to substrate.

Belongs to the ketol-acid reductoisomerase family. Mg(2+) serves as cofactor.

It catalyses the reaction (2R)-2,3-dihydroxy-3-methylbutanoate + NADP(+) = (2S)-2-acetolactate + NADPH + H(+). The enzyme catalyses (2R,3R)-2,3-dihydroxy-3-methylpentanoate + NADP(+) = (S)-2-ethyl-2-hydroxy-3-oxobutanoate + NADPH + H(+). It functions in the pathway amino-acid biosynthesis; L-isoleucine biosynthesis; L-isoleucine from 2-oxobutanoate: step 2/4. It participates in amino-acid biosynthesis; L-valine biosynthesis; L-valine from pyruvate: step 2/4. In terms of biological role, involved in the biosynthesis of branched-chain amino acids (BCAA). Catalyzes an alkyl-migration followed by a ketol-acid reduction of (S)-2-acetolactate (S2AL) to yield (R)-2,3-dihydroxy-isovalerate. In the isomerase reaction, S2AL is rearranged via a Mg-dependent methyl migration to produce 3-hydroxy-3-methyl-2-ketobutyrate (HMKB). In the reductase reaction, this 2-ketoacid undergoes a metal-dependent reduction by NADPH to yield (R)-2,3-dihydroxy-isovalerate. The chain is Ketol-acid reductoisomerase (NADP(+)) from Prochlorococcus marinus subsp. pastoris (strain CCMP1986 / NIES-2087 / MED4).